Reading from the N-terminus, the 2621-residue chain is Nonribosomal peptide synthetase dtpA (2621 aa).

Residues 446–844 form an adenylation 1 region; the sequence is CMEQPNAEAI…GRKDQQVKIR (399 aa). The region spanning 978 to 1054 is the Carrier 1 domain; it reads QPYTQVEETL…EVALYSRALS (77 aa). At S1015 the chain carries O-(pantetheine 4'-phosphoryl)serine. The tract at residues 1095–1506 is condensation 1; it reads EDIYPCTALQ…LNQLELAGPQ (412 aa). The interval 1534 to 1930 is adenylation 2; the sequence is SRTQPGASAI…GRRDNQVKLR (397 aa). A Carrier 2 domain is found at 2071–2147; sequence QPSTTQEALV…LFCTNASTSI (77 aa). O-(pantetheine 4'-phosphoryl)serine is present on S2108. The interval 2220 to 2618 is condensation 2; that stretch reads AIFKLHGSKV…HSARPIASID (399 aa).

It belongs to the NRP synthetase family.

Its pathway is alkaloid biosynthesis. Its function is as follows. Nonribosomal peptide synthetase; part of the gene cluster that mediates the biosynthesis of the dimeric diketopiperazine alkaloid ditryptophenaline. The nonribosomal peptide synthase dtpA accepts L-tryptophan and L-phenylalanine as its substrates and forms the phenylalanyl-tryptophanyl cyclic dipeptide product cyclophenylalanyltryptophenyl. The N-methyltransferase dtpB is responsible for the N-methylation of cyclophenylalanyltryptophenyl to yield cyclo-N-methylphenylalanyltryptophenyl. The cytochrome P450 monooxygenase is responsible not only for pyrroloindole ring formation but also for concurrent dimerization of N-methylphenylalanyltryptophanyl diketopiperazine monomers into a homodimeric product. This Aspergillus flavus (strain ATCC 200026 / FGSC A1120 / IAM 13836 / NRRL 3357 / JCM 12722 / SRRC 167) protein is Nonribosomal peptide synthetase dtpA.